Reading from the N-terminus, the 325-residue chain is Large ribosomal subunit protein uL1m (325 aa).

The transit peptide at 1–50 (MAAAVRCMGRALIHHQRHSLSKMVYQTSLCSCSVNIRVPNRHFAAATKSA) directs the protein to the mitochondrion.

This sequence belongs to the universal ribosomal protein uL1 family. In terms of assembly, component of the mitochondrial large ribosomal subunit (mt-LSU). Mature mammalian 55S mitochondrial ribosomes consist of a small (28S) and a large (39S) subunit. The 28S small subunit contains a 12S ribosomal RNA (12S mt-rRNA) and 30 different proteins. The 39S large subunit contains a 16S rRNA (16S mt-rRNA), a copy of mitochondrial valine transfer RNA (mt-tRNA(Val)), which plays an integral structural role, and 52 different proteins.

It is found in the mitochondrion. The sequence is that of Large ribosomal subunit protein uL1m (MRPL1) from Homo sapiens (Human).